Here is a 454-residue protein sequence, read N- to C-terminus: Zinc finger protein 474 (454 aa).

Residues Arg48–Ile85 form a disordered region. Residues Leu66–Gln79 are compositionally biased toward polar residues. The segment at Gly91–Val120 adopts a C2HC/C3H-type 1 zinc-finger fold. Zn(2+)-binding residues include Cys95, Cys98, His110, and Cys114. The segment at Leu125–Tyr146 is disordered. 5 consecutive C2HC/C3H-type zinc fingers follow at residues Gln162–Gly191, Arg218–Val247, Gln281–Gly310, Pro352–Asn381, and Gln425–Lys454. Residues Cys166, Cys169, His181, Cys185, Cys222, Cys225, His237, and Cys241 each contribute to the Zn(2+) site. The disordered stretch occupies residues Phe256–Leu282. Zn(2+) is bound by residues Cys285, Cys288, His300, Cys304, Cys356, Cys359, His371, Cys375, Cys429, Cys432, His444, and Cys448. The interval Val299 to Pro345 is disordered.

Requires Zn(2+) as cofactor.

This chain is Zinc finger protein 474 (ZNF474), found in Bos taurus (Bovine).